We begin with the raw amino-acid sequence, 88 residues long: Small ribosomal subunit protein bS20 (88 aa).

Belongs to the bacterial ribosomal protein bS20 family.

Functionally, binds directly to 16S ribosomal RNA. The chain is Small ribosomal subunit protein bS20 from Clostridium botulinum (strain 657 / Type Ba4).